Reading from the N-terminus, the 365-residue chain is Phosphate acyltransferase (365 aa).

It belongs to the PlsX family. Homodimer. Probably interacts with PlsY.

It is found in the cytoplasm. The enzyme catalyses a fatty acyl-[ACP] + phosphate = an acyl phosphate + holo-[ACP]. Its pathway is lipid metabolism; phospholipid metabolism. Catalyzes the reversible formation of acyl-phosphate (acyl-PO(4)) from acyl-[acyl-carrier-protein] (acyl-ACP). This enzyme utilizes acyl-ACP as fatty acyl donor, but not acyl-CoA. The chain is Phosphate acyltransferase from Klebsiella pneumoniae subsp. pneumoniae (strain ATCC 700721 / MGH 78578).